The primary structure comprises 274 residues: Pyrroline-5-carboxylate reductase 3 (274 aa).

The residue at position 2 (Ala-2) is an N-acetylalanine.

This sequence belongs to the pyrroline-5-carboxylate reductase family. Homodecamer; composed of 5 homodimers.

Its subcellular location is the cytoplasm. It carries out the reaction L-proline + NADP(+) = (S)-1-pyrroline-5-carboxylate + NADPH + 2 H(+). It catalyses the reaction L-proline + NAD(+) = (S)-1-pyrroline-5-carboxylate + NADH + 2 H(+). It participates in amino-acid biosynthesis; L-proline biosynthesis; L-proline from L-glutamate 5-semialdehyde: step 1/1. Functionally, oxidoreductase that catalyzes the last step in proline biosynthesis, which corresponds to the reduction of pyrroline-5-carboxylate (P5C) to L-proline using NAD(P)H. Proline is synthesized from either glutamate or ornithine; both are converted to P5C, and then to proline via pyrroline-5-carboxylate reductases (PYCRs). PYCR3 is exclusively linked to the biosynthesis of proline from ornithine. In Macaca fascicularis (Crab-eating macaque), this protein is Pyrroline-5-carboxylate reductase 3.